Reading from the N-terminus, the 1466-residue chain is MAERANLVFHNKEIDGTGMKRLISRLIDHFGMGYTSHILDQLKTLGFHQATTTSISLGIEDLLTIPSKGWLVQDAEQQSFLLEKHYYYGAIHAVEKLRQSVEIWYATSEYLKQEMNSNFRITDPSNPVYLMSFSGARGNASQVHQLVGMRGLMADPQGQMIDLPIQSNLREGLSLTEYIISCYGARKGVVDTAVRTADAGYLTRRLVEVVQHILVRRRDCGTIQGISVSPQNGMTEKLFAQTLIGRVLADDIYIGSRCIAARNQDIGIGLVNRFITAFRAQPFRAQPIYIRTPFTCRSTSWICQLCYGRSPTHSDLVELGEAVGIIAGQSIGEPGTQLTLRTFHTGGVFTGGTADLVRSPSNGKIQFTENLVHPTRTRHGQPAFLCYIDLHVTIQSQDILYSVSIPSKSLILVQNDQYVKSEQVIAEIRSGTSTLHFKERVQKHIYSESDGEMHWSTDVYHAPEYQYGNLRRLPKTSHLWILSGNICRSSIASFSLHKDQDQMNTYGKKDREIFDYSRSDRIMANGHWNLIYPSIFQDNSDLLAKKRRNRFVIPLQYHQEQEKELISCLGISIEIPFMGVLRRNTIFAYFDDPRYRKDKKGSGIVKFRYRTLEEEYRTREEDLEDEYETLEDEYRTREDEYEYETLEDEYGSPENEYRTLEKDSEDEYGSPESKYRTREGEYGTLEEDSEDGYGNPGESSEDKYGTLEEDLEEDSEDEYDSSEEDSILKKEGLIEHRGTKEFSLKYQKEVDRFFFILQELHILPRSSSLKVLDNSIIGVNTQLTKNTRSRLGGLVRVKRKKSHTELKIFSGDIHFPEEADKVLGGCLIPPERKKKDSKESKKRKNWVYVQRKKILKSKEKYFVFVRPAVAYEMDEGRNLATLFPKDLLQEEENLQLRIVNFISHENSKLTQRIYHTNSQFVRTCLVVNWEQEEKEKAGASLVEVRANNLIRDFLRIELVKSTISYTRKRYDRTSAGPIPHNRLDHTNTNSFYSKAKIESLSQHQEATGTLLNRNKEYQPLMILSASNCSRIGLFKNSKHPNAIKELNPRIPIQEIFGPLGVIVPSTSNFSSSYYLLTHNQSLLKKYLFLANLKQTFQVLQGLKYSLIDENKRVSNFDSNIMLDPLLLNCHFVHHDSWEETLAIIHLGQFICENVCLFKSHIKKSGQIFIVNMDSFVIRAAKPYLATTGATVNGHYGEILYKGDRLVTFIYEKSRSSDITQGLPKVEQIFEARSIDSLSPNLERRIEDWNERIPRILGVPWGFLIGAELTIAQSRISLVNKIQKVYRSQGVQIHNRHIEIIIRQVTSKVRVSEDGMSNVFSPGELIGLLRAERAGRALDESIYYRAILLGITRASLNTQSFISEASFQETARVLAKAALRGRIDWLKGLKENVVLGGIIPVGTGFLKFVHRSPQDKNLYFEIQKQNLFASEMRDFLFLHTELVSSDSDVANNFYETSEPPFTPIYTI.

Positions 220, 296, 303, and 306 each coordinate Zn(2+). The tract at residues 618-725 (TREEDLEDEY…EDEYDSSEED (108 aa)) is disordered. Composition is skewed to acidic residues over residues 621 to 631 (EDLEDEYETLE), 639 to 651 (DEYE…DEYG), and 707 to 725 (LEED…SEED).

The protein belongs to the RNA polymerase beta' chain family. RpoC2 subfamily. In terms of assembly, in plastids the minimal PEP RNA polymerase catalytic core is composed of four subunits: alpha, beta, beta', and beta''. When a (nuclear-encoded) sigma factor is associated with the core the holoenzyme is formed, which can initiate transcription. Zn(2+) serves as cofactor.

It is found in the plastid. The protein localises to the chloroplast. The catalysed reaction is RNA(n) + a ribonucleoside 5'-triphosphate = RNA(n+1) + diphosphate. Functionally, DNA-dependent RNA polymerase catalyzes the transcription of DNA into RNA using the four ribonucleoside triphosphates as substrates. The chain is DNA-directed RNA polymerase subunit beta'' from Agrostis stolonifera (Creeping bentgrass).